A 595-amino-acid chain; its full sequence is NADH-quinone oxidoreductase subunit C/D (595 aa).

Positions 1–185 (MNKNICLSAS…NPFVLTKEKE (185 aa)) are NADH dehydrogenase I subunit C. The tract at residues 209-595 (DFMFLNFGPN…IDFVMSDVDR (387 aa)) is NADH dehydrogenase I subunit D.

The protein in the N-terminal section; belongs to the complex I 30 kDa subunit family. This sequence in the C-terminal section; belongs to the complex I 49 kDa subunit family. In terms of assembly, NDH-1 is composed of 13 different subunits. Subunits NuoB, CD, E, F, and G constitute the peripheral sector of the complex.

It is found in the cell inner membrane. It catalyses the reaction a quinone + NADH + 5 H(+)(in) = a quinol + NAD(+) + 4 H(+)(out). Functionally, NDH-1 shuttles electrons from NADH, via FMN and iron-sulfur (Fe-S) centers, to quinones in the respiratory chain. The immediate electron acceptor for the enzyme in this species is believed to be ubiquinone. Couples the redox reaction to proton translocation (for every two electrons transferred, four hydrogen ions are translocated across the cytoplasmic membrane), and thus conserves the redox energy in a proton gradient. The sequence is that of NADH-quinone oxidoreductase subunit C/D from Baumannia cicadellinicola subsp. Homalodisca coagulata.